A 302-amino-acid polypeptide reads, in one-letter code: Oxygen-dependent coproporphyrinogen-III oxidase (302 aa).

Ser94 lines the substrate pocket. Positions 98 and 108 each coordinate a divalent metal cation. Residue His108 is the Proton donor of the active site. 110-112 serves as a coordination point for substrate; it reads NVR. The a divalent metal cation site is built by His147 and His177. An important for dimerization region spans residues 242-277; it reads YVEFNLVYDRGTIFGLQSGGRTESILMSLPPLVRWD. 260 to 262 is a binding site for substrate; that stretch reads GGR.

This sequence belongs to the aerobic coproporphyrinogen-III oxidase family. In terms of assembly, homodimer. A divalent metal cation serves as cofactor.

It is found in the cytoplasm. It catalyses the reaction coproporphyrinogen III + O2 + 2 H(+) = protoporphyrinogen IX + 2 CO2 + 2 H2O. Its pathway is porphyrin-containing compound metabolism; protoporphyrin-IX biosynthesis; protoporphyrinogen-IX from coproporphyrinogen-III (O2 route): step 1/1. Its function is as follows. Involved in the heme biosynthesis. Catalyzes the aerobic oxidative decarboxylation of propionate groups of rings A and B of coproporphyrinogen-III to yield the vinyl groups in protoporphyrinogen-IX. The polypeptide is Oxygen-dependent coproporphyrinogen-III oxidase (Alcanivorax borkumensis (strain ATCC 700651 / DSM 11573 / NCIMB 13689 / SK2)).